We begin with the raw amino-acid sequence, 54 residues long: Large ribosomal subunit protein bL33 (54 aa).

This sequence belongs to the bacterial ribosomal protein bL33 family.

This Roseiflexus castenholzii (strain DSM 13941 / HLO8) protein is Large ribosomal subunit protein bL33.